The chain runs to 513 residues: Activin receptor type-2A (513 aa).

Residues Met1–Gly19 form the signal peptide. At Ala20 to Pro135 the chain is on the extracellular side. Cystine bridges form between Cys30–Cys60, Cys50–Cys78, Cys85–Cys104, Cys91–Cys103, and Cys105–Cys110. N-linked (GlcNAc...) asparagine glycosylation is found at Asn43 and Asn66. Residues Tyr136 to Tyr161 traverse the membrane as a helical segment. Topologically, residues Arg162 to Leu513 are cytoplasmic. The 294-residue stretch at Leu192–Leu485 folds into the Protein kinase domain. ATP contacts are provided by residues Lys198–Val206 and Lys219. Asp322 serves as the catalytic Proton acceptor.

The protein belongs to the protein kinase superfamily. TKL Ser/Thr protein kinase family. TGFB receptor subfamily. As to quaternary structure, part of a complex consisting of MAGI2/ARIP1, ACVR2A, ACVR1B and SMAD3. Interacts with MAGI2/ARIP1. Interacts with type I receptor ACVR1. Interacts with BMP7. Interacts with TSC22D1/TSC-22. Interacts with activin A/INHBA. Requires Mg(2+) as cofactor. Mn(2+) is required as a cofactor.

Its subcellular location is the cell membrane. It carries out the reaction L-threonyl-[receptor-protein] + ATP = O-phospho-L-threonyl-[receptor-protein] + ADP + H(+). The catalysed reaction is L-seryl-[receptor-protein] + ATP = O-phospho-L-seryl-[receptor-protein] + ADP + H(+). Its function is as follows. On ligand binding, forms a receptor complex consisting of two type II and two type I transmembrane serine/threonine kinases. Type II receptors phosphorylate and activate type I receptors which autophosphorylate, then bind and activate SMAD transcriptional regulators. Receptor for activin A, activin B and inhibin A. Mediates induction of adipogenesis by GDF6. The polypeptide is Activin receptor type-2A (ACVR2A) (Bos taurus (Bovine)).